We begin with the raw amino-acid sequence, 179 residues long: ADP-ribosylation factor-like protein 5A (179 aa).

Residue Gly2 is the site of N-myristoyl glycine attachment. Residues 23-30, 66-70, 125-128, and Ala159 contribute to the GTP site; these read GLDNAGKT, DIGGQ, and NKQD.

Belongs to the small GTPase superfamily. Arf family.

Its function is as follows. Lacks ADP-ribosylation enhancing activity. The polypeptide is ADP-ribosylation factor-like protein 5A (Arl5a) (Mus musculus (Mouse)).